The following is a 398-amino-acid chain: Alpha-2,8-sialyltransferase 8F (398 aa).

The Cytoplasmic segment spans residues 1–3 (MRS). The chain crosses the membrane as a helical; Signal-anchor for type II membrane protein span at residues 4-24 (GGTLFALIGSLMLLLLLRMLW). Over 25 to 398 (CPADAPARSR…KLQFSKCETA (374 aa)) the chain is Lumenal. Asn-66, Asn-93, Asn-151, and Asn-196 each carry an N-linked (GlcNAc...) asparagine glycan. 2 disulfides stabilise this stretch: Cys-186-Cys-335 and Cys-200-Cys-395. Substrate-binding positions include Asn-214, 236–238 (NPS), and 322–324 (STG). His-370 (proton donor/acceptor) is an active-site residue.

The protein belongs to the glycosyltransferase 29 family. As to expression, highly expressed in kidney and expressed and all tissues tested.

The protein localises to the golgi apparatus membrane. The catalysed reaction is a ganglioside GM3 + CMP-N-acetyl-beta-neuraminate = a ganglioside GD3 + CMP + H(+). It carries out the reaction a ganglioside GM3 (d18:1(4E)) + CMP-N-acetyl-beta-neuraminate = a ganglioside GD3 (d18:1(4E)) + CMP + H(+). It catalyses the reaction a ganglioside GD1a (d18:1(4E)) + CMP-N-acetyl-beta-neuraminate = a ganglioside GT1a (d18:1(4E)) + CMP + H(+). The enzyme catalyses a ganglioside GD1a + CMP-N-acetyl-beta-neuraminate = a ganglioside GT1a + CMP + H(+). The catalysed reaction is a ganglioside GM1b (d18:1(4E)) + CMP-N-acetyl-beta-neuraminate = a ganglioside GD1c (d18:1(4E)) + CMP + H(+). It carries out the reaction a ganglioside GM1b + CMP-N-acetyl-beta-neuraminate = a ganglioside GD1c + CMP + H(+). It catalyses the reaction a ganglioside GM4 (d18:1(4E)) + CMP-N-acetyl-beta-neuraminate = an N-acetyl-alpha-neuraminosyl-(2-&gt;8)-N-acetyl-alpha-neuraminosyl-(2-&gt;3)-beta-D-galactosyl-(1&lt;-&gt;1')-N-acylsphing-4-enine + CMP + H(+). The enzyme catalyses N-acetyl-alpha-neuraminosyl-(2-&gt;3)-beta-D-galactosyl-(1&lt;-&gt;1')-ceramide + CMP-N-acetyl-beta-neuraminate = N-acetyl-alpha-neuraminosyl-(2-&gt;8)-N-acetyl-alpha-neuraminosyl-(2-&gt;3)-beta-D-galactosyl-(1&lt;-&gt;1')-ceramide + CMP + H(+). The catalysed reaction is a ganglioside GT1b (d18:1(4E)) + CMP-N-acetyl-beta-neuraminate = a ganglioside GQ1b (d18:1(4E)) + CMP + H(+). It carries out the reaction a ganglioside GT1b + CMP-N-acetyl-beta-neuraminate = a ganglioside GQ1b + CMP + H(+). It functions in the pathway protein modification; protein glycosylation. In terms of biological role, alpha-2,8-sialyltransferase that prefers O-glycans to N-glycans or glycolipids as acceptor substrates. The minimal acceptor substrate is the NeuAc-alpha-2,3(6)-Gal sequence at the non-reducing end of their carbohydrate groups. In Mus musculus (Mouse), this protein is Alpha-2,8-sialyltransferase 8F.